The chain runs to 235 residues: Probable transcriptional regulatory protein Cj1172c (235 aa).

It belongs to the TACO1 family.

The protein localises to the cytoplasm. The sequence is that of Probable transcriptional regulatory protein Cj1172c from Campylobacter jejuni subsp. jejuni serotype O:2 (strain ATCC 700819 / NCTC 11168).